We begin with the raw amino-acid sequence, 504 residues long: Putative arrestin-related trafficking adapter SPBC839.02 (504 aa).

Positions glutamine 481–asparagine 504 are disordered.

The protein belongs to the ALY1 family.

In terms of biological role, may regulate endocytosis in response to extracellular stimuli. The polypeptide is Putative arrestin-related trafficking adapter SPBC839.02 (Schizosaccharomyces pombe (strain 972 / ATCC 24843) (Fission yeast)).